A 226-amino-acid polypeptide reads, in one-letter code: SURF1-like protein (226 aa).

2 consecutive transmembrane segments (helical) span residues 3 to 23 (TNLV…WQLS) and 199 to 219 (LEYA…YVIY).

The protein belongs to the SURF1 family.

It localises to the cell membrane. This Rickettsia felis (strain ATCC VR-1525 / URRWXCal2) (Rickettsia azadi) protein is SURF1-like protein.